We begin with the raw amino-acid sequence, 757 residues long: MDVNPTLLFLKVPAQNAISTTFPYTGDPPYSHGTGTGYTMDTVNRTHQYSEKGKWTTNTETGAPQLNPIDGPLPENHEPSGYAQTDCVLEAMAFLEESHPGIFENSCLETMEVVQQTRVDKLTQGRQTYDWTLNRNQPAATALANTIEVFRSNDLTANESGRLIDFLKDVMESMDKEEMEITTHFQRKRRIRDNMTKKMVTQRTIGKKKQRLNKKSYLIRALTLNTMTKDAERGKLKRRAIATPGMQIRGFVYFVETLARSICEKLEQSGLPVGGNEKKAKLANVVRKMMTNSQDTELSFTITGDNTKWNENQNPRMFLAMITYITRNQPDWFRNVLSIAPIMFSNKMARLGKGYMFESKSMKLRTQIPAEMLANIDLKYFNELTKKKIEKIRPLLIDGTASLSPGMMMGMFNMLSTVLGVSILNLGQKRYTKTTYWWDGLQSSDDFALIVNAPNHEGIQAGVDRFYRTCKLVGINMSKKKSYINRTGTFEFTSFFYRYGFVANFSMELPSFGVSGINESADMSIGVTVIKNNMINNDLGPATAQMALQLFIKDYRYTYRCHRGDTQIQTRRSFELKKLWEQTRSKAGLLVSDGGPNLYNIRNLHIPEVCLKWELMDEDYQGRLCNPLNPFVSHKEIESVNNAVVMPAHGPAKSMEYDAVATTHSWIPKRNRSILNTSQRGILEDEQMYQKCCNLFEKFFPSSSYRRPVGISSMVEAMVSRARIDARIDFESGRIKKEEFAEIMKICSTIEELRRQK.

Residues 50–81 (SEKGKWTTNTETGAPQLNPIDGPLPENHEPSG) form a disordered region. The segment covering 55–64 (WTTNTETGAP) has biased composition (polar residues). 2 short sequence motifs (nuclear localization signal) span residues 187–195 (RKRRIRDNM) and 203–216 (RTIG…NKKS). Residues 249–256 (RGFVYFVE) are promoter-binding site. Residues 286 to 483 (VRKMMTNSQD…GINMSKKKSY (198 aa)) form the RdRp catalytic domain.

It belongs to the influenza viruses polymerase PB1 family. As to quaternary structure, influenza RNA polymerase is composed of three subunits: PB1, PB2 and PA. Interacts (via N-terminus) with PA (via C-terminus). Interacts (via C-terminus) with PB2 (via N-terminus); this interaction is essential for transcription initiation. Post-translationally, phosphorylated by host PRKCA.

It localises to the host nucleus. The protein resides in the host cytoplasm. The enzyme catalyses RNA(n) + a ribonucleoside 5'-triphosphate = RNA(n+1) + diphosphate. Its function is as follows. RNA-dependent RNA polymerase which is responsible for replication and transcription of virus RNA segments. The transcription of viral mRNAs occurs by a unique mechanism called cap-snatching. 5' methylated caps of cellular mRNAs are cleaved after 10-13 nucleotides by PA. In turn, these short capped RNAs are used as primers by PB1 for transcription of viral mRNAs. During virus replication, PB1 initiates RNA synthesis and copy vRNA into complementary RNA (cRNA) which in turn serves as a template for the production of more vRNAs. This chain is RNA-directed RNA polymerase catalytic subunit, found in Influenza A virus (strain A/Silky Chicken/Hong Kong/YU100/2002 H5N1 genotype X3).